The sequence spans 200 residues: MSKYAGIVLAGGMSSRFGEPKALASWQGSTFIEHILKVMTSTLQEVVVISHSHIKERVEKLVQVPVIEDIPHYKGNGPLAGIVSGMEYIEADWYAIMPCDAPNVSHEWFTILLEQTSNEYDAVVPIINGRKQPLLAAYHNRVKEKIYTLLQEEKRSMGQLLSQCNVKYIAGEDIQANADWFINVNTKEEYVQAQKDLSNE.

GTP is bound by residues 9 to 11, K21, D69, and D100; that span reads LAG. D100 is a binding site for Mg(2+).

Belongs to the MobA family. The cofactor is Mg(2+).

Its subcellular location is the cytoplasm. The enzyme catalyses Mo-molybdopterin + GTP + H(+) = Mo-molybdopterin guanine dinucleotide + diphosphate. Transfers a GMP moiety from GTP to Mo-molybdopterin (Mo-MPT) cofactor (Moco or molybdenum cofactor) to form Mo-molybdopterin guanine dinucleotide (Mo-MGD) cofactor. The protein is Probable molybdenum cofactor guanylyltransferase of Bacillus cereus (strain AH187).